Here is a 169-residue protein sequence, read N- to C-terminus: Transmembrane protein B169L (169 aa).

2 consecutive transmembrane segments (helical) span residues 28–48 (NPFIVALIITAVVLVVFFAIC) and 60–80 (TAIYVYICIVALLFLHYYVLN). An N-linked (GlcNAc...) asparagine; by host glycan is attached at asparagine 88. The disordered stretch occupies residues 107 to 169 (DEIIPPISPP…EVIMPSQYNN (63 aa)). The segment covering 140–154 (KPADSKPASSADSKP) has biased composition (low complexity).

The protein belongs to the asfivirus B169L family.

It is found in the host membrane. Its subcellular location is the virion. The polypeptide is Transmembrane protein B169L (Ornithodoros (relapsing fever ticks)).